Here is a 468-residue protein sequence, read N- to C-terminus: Acid phosphatase PHO1 (468 aa).

The N-terminal stretch at 1 to 22 (MFSPILSLEIILALATLQSVFA) is a signal peptide. The Nucleophile role is filled by H84. N163, N196, N256, and N321 each carry an N-linked (GlcNAc...) asparagine glycan. D346 (proton donor) is an active-site residue. N-linked (GlcNAc...) asparagine glycosylation is found at N360 and N453.

The protein belongs to the histidine acid phosphatase family.

It carries out the reaction a phosphate monoester + H2O = an alcohol + phosphate. The chain is Acid phosphatase PHO1 (PHO1) from Komagataella pastoris (Yeast).